The primary structure comprises 404 residues: Sialidase (404 aa).

An N-terminal signal peptide occupies residues 1-27 (MKKFIKILKVLSMAIVLSACNINGIFA). Substrate is bound at residue Arg55. Asp80 (proton acceptor) is an active-site residue. 3 BNR repeats span residues 89-100 (AKSTDNGQTWDY), 158-169 (VYSDDNGETWSD), and 226-237 (IYSKDNGETWTM). Arg263 lines the substrate pocket. A BNR 4 repeat occupies 273-284 (YISYDMGSTWEV). The active-site Nucleophile is the Tyr365.

The protein belongs to the glycosyl hydrolase 33 family. It is possible that the sialidase is cleaved in front of a cysteine within the leader peptide, forming a glyceride thioether bond which links the protein to the membrane. A second proteolytic cleavage releases the mature extracellular protein.

It is found in the secreted. It carries out the reaction Hydrolysis of alpha-(2-&gt;3)-, alpha-(2-&gt;6)-, alpha-(2-&gt;8)- glycosidic linkages of terminal sialic acid residues in oligosaccharides, glycoproteins, glycolipids, colominic acid and synthetic substrates.. Its function is as follows. Sialidases have been suggested to be pathogenic factors in microbial infections. In Paraclostridium sordellii (Clostridium sordellii), this protein is Sialidase.